Here is a 466-residue protein sequence, read N- to C-terminus: Gamma-aminobutyric acid receptor subunit gamma-2 (466 aa).

The first 38 residues, 1–38 (MSSPNTWSTGSTVYSPVFSQKMTLWILLLLSLYPGFTS), serve as a signal peptide directing secretion. Residues 39–274 (QKSDDDYEDY…FDLSRRMGYF (236 aa)) are Extracellular-facing. Residues Asn51 and Asn128 are each glycosylated (N-linked (GlcNAc...) asparagine). A disulfide bridge connects residues Cys189 and Cys203. The N-linked (GlcNAc...) asparagine glycan is linked to Asn246. Residues 275 to 295 (TIQTYIPCTLIVVLSWVSFWI) form a helical membrane-spanning segment. The Cytoplasmic segment spans residues 296 to 301 (NKDAVP). Residues 302-321 (ARTSLGITTVLTMTTLSTIA) traverse the membrane as a helical segment. The Extracellular segment spans residues 322-333 (RKSLPKVSYVTA). Residues 334 to 358 (MDLFVSVCFIFVFSALVEYGTLHYF) form a helical membrane-spanning segment. Over 359–442 (VSNRKPSKDK…IHIRIAKMDS (84 aa)) the chain is Cytoplasmic. The helical transmembrane segment at 443–463 (YARIFFPTAFCLFNLVYWVSY) threads the bilayer. Over 464–466 (LYL) the chain is Extracellular.

The protein belongs to the ligand-gated ion channel (TC 1.A.9) family. Gamma-aminobutyric acid receptor (TC 1.A.9.5) subfamily. GABRG2 sub-subfamily. In terms of assembly, heteropentamer, formed by a combination of alpha (GABRA1-6), beta (GABRB1-3), gamma (GABRG1-3), delta (GABRD), epsilon (GABRE), rho (GABRR1-3), pi (GABRP) and theta (GABRQ) chains, each subunit exhibiting distinct physiological and pharmacological properties. Interacts with GABARAP. Interacts with KIF21B. Identified in a complex of 720 kDa composed of LHFPL4, NLGN2, GABRA1, GABRB2, GABRG2 and GABRB3. Interacts with LHFPL4. Interacts with SHISA7; interaction leads to the regulation of GABA(A) receptor trafficking, channel deactivation kinetics and pharmacology. Post-translationally, palmitoylated by ZDHHC3/GODZ; required for the accumulation of GABA(A) receptors at the postsynaptic membrane of inhibitory GABAergic synapses. In terms of processing, glycosylated. In terms of tissue distribution, expressed in brain (at protein level). Expressed in lungs, in alveolar epithelium.

The protein resides in the postsynaptic cell membrane. It localises to the cell membrane. It is found in the cell projection. The protein localises to the dendrite. Its subcellular location is the cytoplasmic vesicle membrane. It catalyses the reaction chloride(in) = chloride(out). With respect to regulation, allosterically activated by benzodiazepines. Activated by pentobarbital. Inhibited by the antagonist bicuculline. Inhibited by zinc ions. Potentiated by histamine. Its function is as follows. Gamma subunit of the heteropentameric ligand-gated chloride channel gated by gamma-aminobutyric acid (GABA), a major inhibitory neurotransmitter in the brain. GABA-gated chloride channels, also named GABA(A) receptors (GABAAR), consist of five subunits arranged around a central pore and contain GABA active binding site(s) located at the alpha and beta subunit interface(s). When activated by GABA, GABAARs selectively allow the flow of chloride anions across the cell membrane down their electrochemical gradient. Gamma-2/GABRG2-containing GABAARs are found at both synaptic and extrasynaptic sites. Chloride influx into the postsynaptic neuron following GABAAR opening decreases the neuron ability to generate a new action potential, thereby reducing nerve transmission. GABAARs containing alpha-1 and beta-2 or -3 subunits exhibit synaptogenic activity; the gamma-2 subunit being necessary but not sufficient to induce rapid synaptic contacts formation. Extrasynaptic gamma-2-containing receptors contribute to the tonic GABAergic inhibition. GABAARs function also as histamine receptor where histamine binds at the interface of two neighboring beta subunits and potentiates GABA response in a gamma-2 subunit-controlled manner. The protein is Gamma-aminobutyric acid receptor subunit gamma-2 of Rattus norvegicus (Rat).